A 147-amino-acid chain; its full sequence is D-aminoacyl-tRNA deacylase (147 aa).

The Gly-cisPro motif, important for rejection of L-amino acids motif lies at 137–138 (GP).

Belongs to the DTD family. In terms of assembly, homodimer.

It is found in the cytoplasm. The enzyme catalyses glycyl-tRNA(Ala) + H2O = tRNA(Ala) + glycine + H(+). It catalyses the reaction a D-aminoacyl-tRNA + H2O = a tRNA + a D-alpha-amino acid + H(+). An aminoacyl-tRNA editing enzyme that deacylates mischarged D-aminoacyl-tRNAs. Also deacylates mischarged glycyl-tRNA(Ala), protecting cells against glycine mischarging by AlaRS. Acts via tRNA-based rather than protein-based catalysis; rejects L-amino acids rather than detecting D-amino acids in the active site. By recycling D-aminoacyl-tRNA to D-amino acids and free tRNA molecules, this enzyme counteracts the toxicity associated with the formation of D-aminoacyl-tRNA entities in vivo and helps enforce protein L-homochirality. In Exiguobacterium sp. (strain ATCC BAA-1283 / AT1b), this protein is D-aminoacyl-tRNA deacylase.